The following is an 84-amino-acid chain: Cytochrome b559 subunit alpha (84 aa).

A helical membrane pass occupies residues Ile-22–Phe-36. Residue His-24 participates in heme binding.

The protein belongs to the PsbE/PsbF family. Heterodimer of an alpha subunit and a beta subunit. PSII is composed of 1 copy each of membrane proteins PsbA, PsbB, PsbC, PsbD, PsbE, PsbF, PsbH, PsbI, PsbJ, PsbK, PsbL, PsbM, PsbT, PsbX, PsbY, PsbZ, Psb30/Ycf12, at least 3 peripheral proteins of the oxygen-evolving complex and a large number of cofactors. It forms dimeric complexes. It depends on heme b as a cofactor.

The protein resides in the plastid. Its subcellular location is the chloroplast thylakoid membrane. Its function is as follows. This b-type cytochrome is tightly associated with the reaction center of photosystem II (PSII). PSII is a light-driven water:plastoquinone oxidoreductase that uses light energy to abstract electrons from H(2)O, generating O(2) and a proton gradient subsequently used for ATP formation. It consists of a core antenna complex that captures photons, and an electron transfer chain that converts photonic excitation into a charge separation. This chain is Cytochrome b559 subunit alpha, found in Emiliania huxleyi (Coccolithophore).